The following is a 373-amino-acid chain: Flagellar P-ring protein (373 aa).

An N-terminal signal peptide occupies residues 1 to 27 (MPSFSPTLLKLAAAALSALLLSGVAAS).

The protein belongs to the FlgI family. In terms of assembly, the basal body constitutes a major portion of the flagellar organelle and consists of four rings (L,P,S, and M) mounted on a central rod.

The protein resides in the periplasm. The protein localises to the bacterial flagellum basal body. Functionally, assembles around the rod to form the L-ring and probably protects the motor/basal body from shearing forces during rotation. This Rhodopseudomonas palustris (strain BisB5) protein is Flagellar P-ring protein.